We begin with the raw amino-acid sequence, 253 residues long: Adenosylcobinamide-GDP ribazoletransferase (253 aa).

A run of 7 helical transmembrane segments spans residues isoleucine 33–leucine 53, isoleucine 56–asparagine 76, isoleucine 106–leucine 126, phenylalanine 132–isoleucine 152, valine 178–phenylalanine 198, leucine 209–leucine 229, and glutamate 233–histidine 253.

The protein belongs to the CobS family. Mg(2+) serves as cofactor.

The protein localises to the cell membrane. It catalyses the reaction alpha-ribazole + adenosylcob(III)inamide-GDP = adenosylcob(III)alamin + GMP + H(+). It carries out the reaction alpha-ribazole 5'-phosphate + adenosylcob(III)inamide-GDP = adenosylcob(III)alamin 5'-phosphate + GMP + H(+). It participates in cofactor biosynthesis; adenosylcobalamin biosynthesis; adenosylcobalamin from cob(II)yrinate a,c-diamide: step 7/7. Functionally, joins adenosylcobinamide-GDP and alpha-ribazole to generate adenosylcobalamin (Ado-cobalamin). Also synthesizes adenosylcobalamin 5'-phosphate from adenosylcobinamide-GDP and alpha-ribazole 5'-phosphate. The protein is Adenosylcobinamide-GDP ribazoletransferase of Saccharolobus islandicus (strain M.16.27) (Sulfolobus islandicus).